A 250-amino-acid polypeptide reads, in one-letter code: Ribosomal RNA small subunit methyltransferase J (250 aa).

S-adenosyl-L-methionine is bound by residues 96–97 (RD) and D168.

The protein belongs to the methyltransferase superfamily. RsmJ family.

It is found in the cytoplasm. The catalysed reaction is guanosine(1516) in 16S rRNA + S-adenosyl-L-methionine = N(2)-methylguanosine(1516) in 16S rRNA + S-adenosyl-L-homocysteine + H(+). In terms of biological role, specifically methylates the guanosine in position 1516 of 16S rRNA. The sequence is that of Ribosomal RNA small subunit methyltransferase J from Neisseria meningitidis serogroup C (strain 053442).